Here is a 562-residue protein sequence, read N- to C-terminus: NAD-dependent malic enzyme (562 aa).

The Proton donor role is filled by Tyr-101. Position 154 (Arg-154) interacts with NAD(+). Lys-172 functions as the Proton acceptor in the catalytic mechanism. Residues Glu-243, Asp-244, and Asp-267 each contribute to the a divalent metal cation site. The NAD(+) site is built by Asp-267 and Asn-415.

This sequence belongs to the malic enzymes family. In terms of assembly, homotetramer. It depends on Mg(2+) as a cofactor. Requires Mn(2+) as cofactor.

The enzyme catalyses (S)-malate + NAD(+) = pyruvate + CO2 + NADH. It carries out the reaction oxaloacetate + H(+) = pyruvate + CO2. This Shewanella loihica (strain ATCC BAA-1088 / PV-4) protein is NAD-dependent malic enzyme.